The primary structure comprises 281 residues: MTAQLIDGNALSRQLRAEVARRAAALRARGITPGLAVVLVGENPASQVYVRNKVKACQDNGLHSVLEHYPAALSEAELLARVHALNNDPAIHGILVQLPLPAHIDAHKVIEAIAPGKDVDGFHVASAGALMVGQPGFWPCTPYGCMKMLESIGYDLRGKHAVVIGRSNIVGKPMAMMLLQKNATVTICHSATKDLKAMTLQADVIVAAVGKRNVLTADMVKPGAVVIDVGMNRNDEGKLCGDVDFEGVKEVAGYITPVPGGVGPMTITMLLVNTLESAERL.

NADP(+)-binding positions include 165–167 and Ser190; that span reads GRS.

The protein belongs to the tetrahydrofolate dehydrogenase/cyclohydrolase family. Homodimer.

It carries out the reaction (6R)-5,10-methylene-5,6,7,8-tetrahydrofolate + NADP(+) = (6R)-5,10-methenyltetrahydrofolate + NADPH. The catalysed reaction is (6R)-5,10-methenyltetrahydrofolate + H2O = (6R)-10-formyltetrahydrofolate + H(+). The protein operates within one-carbon metabolism; tetrahydrofolate interconversion. Its function is as follows. Catalyzes the oxidation of 5,10-methylenetetrahydrofolate to 5,10-methenyltetrahydrofolate and then the hydrolysis of 5,10-methenyltetrahydrofolate to 10-formyltetrahydrofolate. The polypeptide is Bifunctional protein FolD (Polaromonas sp. (strain JS666 / ATCC BAA-500)).